We begin with the raw amino-acid sequence, 459 residues long: UDP-N-acetylmuramoyl-tripeptide--D-alanyl-D-alanine ligase (459 aa).

Position 121–127 (121–127) interacts with ATP; the sequence is GSSGKTT.

The protein belongs to the MurCDEF family. MurF subfamily.

The protein localises to the cytoplasm. It catalyses the reaction D-alanyl-D-alanine + UDP-N-acetyl-alpha-D-muramoyl-L-alanyl-gamma-D-glutamyl-meso-2,6-diaminopimelate + ATP = UDP-N-acetyl-alpha-D-muramoyl-L-alanyl-gamma-D-glutamyl-meso-2,6-diaminopimeloyl-D-alanyl-D-alanine + ADP + phosphate + H(+). The protein operates within cell wall biogenesis; peptidoglycan biosynthesis. Functionally, involved in cell wall formation. Catalyzes the final step in the synthesis of UDP-N-acetylmuramoyl-pentapeptide, the precursor of murein. This Treponema pallidum (strain Nichols) protein is UDP-N-acetylmuramoyl-tripeptide--D-alanyl-D-alanine ligase.